A 153-amino-acid polypeptide reads, in one-letter code: MRESELIVRRIREGTVIDHIDGGRGLQVLSALGIDGGDGSLITVALNVPSGKFSKKDIIKVENRFLKDDDTNRLALIAPSATVNIIRDYKLAEKRRVALPNEIGRIFRCTNPDCITNSSERIESVMDVASREGPVLKCRYCSRILDVSRMDYT.

Zn(2+) is bound by residues cysteine 109, cysteine 114, cysteine 138, and cysteine 141.

This sequence belongs to the PyrI family. Contains catalytic and regulatory chains. Zn(2+) serves as cofactor.

Functionally, involved in allosteric regulation of aspartate carbamoyltransferase. In Cenarchaeum symbiosum (strain A), this protein is Aspartate carbamoyltransferase regulatory chain.